We begin with the raw amino-acid sequence, 383 residues long: Erythronate-4-phosphate dehydrogenase (383 aa).

Substrate contacts are provided by S45 and T66. Residues D146, T174, 205–207 (ASR), and D231 contribute to the NAD(+) site. The active site involves R207. Residue E236 is part of the active site. The active-site Proton donor is the H253. G256 contributes to the NAD(+) binding site. Y257 provides a ligand contact to substrate.

This sequence belongs to the D-isomer specific 2-hydroxyacid dehydrogenase family. PdxB subfamily. Homodimer.

It is found in the cytoplasm. It carries out the reaction 4-phospho-D-erythronate + NAD(+) = (R)-3-hydroxy-2-oxo-4-phosphooxybutanoate + NADH + H(+). The protein operates within cofactor biosynthesis; pyridoxine 5'-phosphate biosynthesis; pyridoxine 5'-phosphate from D-erythrose 4-phosphate: step 2/5. In terms of biological role, catalyzes the oxidation of erythronate-4-phosphate to 3-hydroxy-2-oxo-4-phosphonooxybutanoate. The sequence is that of Erythronate-4-phosphate dehydrogenase from Pseudomonas entomophila (strain L48).